We begin with the raw amino-acid sequence, 953 residues long: TPR repeat-containing protein ZIP4 (953 aa).

One copy of the TPR 1 repeat lies at 129-162 (ASFFHRSGLAWLDLGRVDLASACFEKATPLVSAA). Positions 248–269 (AASPSSSSPRTPPYGGATPKTP) are disordered. TPR repeat units follow at residues 432-465 (HALL…VSRD) and 473-506 (ADCF…EPNI). Positions 924-953 (RVSGDEPDECSQEEAPKASISGSMSQPVLV) are disordered. Residues 943 to 953 (ISGSMSQPVLV) show a composition bias toward polar residues.

The protein localises to the nucleus. It is found in the chromosome. Required for crossover formation, complete synapsis of homologous chromosomes and bivalent formation during meiosis. Is specific to recombination events resulting in interference-sensitive crossovers (class I meiotic crossover) and works cooperatively with MER3 to promote crossovers. This chain is TPR repeat-containing protein ZIP4, found in Oryza sativa subsp. indica (Rice).